We begin with the raw amino-acid sequence, 271 residues long: 3-methyl-2-oxobutanoate hydroxymethyltransferase (271 aa).

Residues Asp51 and Asp90 each coordinate Mg(2+). Residues 51–52, Asp90, and Lys118 contribute to the 3-methyl-2-oxobutanoate site; that span reads DS. A Mg(2+)-binding site is contributed by Glu120. Glu186 (proton acceptor) is an active-site residue.

The protein belongs to the PanB family. Homodecamer; pentamer of dimers. Requires Mg(2+) as cofactor.

The protein resides in the cytoplasm. It carries out the reaction 3-methyl-2-oxobutanoate + (6R)-5,10-methylene-5,6,7,8-tetrahydrofolate + H2O = 2-dehydropantoate + (6S)-5,6,7,8-tetrahydrofolate. The protein operates within cofactor biosynthesis; (R)-pantothenate biosynthesis; (R)-pantoate from 3-methyl-2-oxobutanoate: step 1/2. Its function is as follows. Catalyzes the reversible reaction in which hydroxymethyl group from 5,10-methylenetetrahydrofolate is transferred onto alpha-ketoisovalerate to form ketopantoate. This chain is 3-methyl-2-oxobutanoate hydroxymethyltransferase, found in Stenotrophomonas maltophilia (strain R551-3).